Consider the following 350-residue polypeptide: Histidinol-phosphate aminotransferase (350 aa).

The residue at position 220 (K220) is an N6-(pyridoxal phosphate)lysine.

It belongs to the class-II pyridoxal-phosphate-dependent aminotransferase family. Histidinol-phosphate aminotransferase subfamily. As to quaternary structure, homodimer. It depends on pyridoxal 5'-phosphate as a cofactor.

It carries out the reaction L-histidinol phosphate + 2-oxoglutarate = 3-(imidazol-4-yl)-2-oxopropyl phosphate + L-glutamate. The protein operates within amino-acid biosynthesis; L-histidine biosynthesis; L-histidine from 5-phospho-alpha-D-ribose 1-diphosphate: step 7/9. This chain is Histidinol-phosphate aminotransferase, found in Macrococcus caseolyticus (strain JCSC5402) (Macrococcoides caseolyticum).